Consider the following 343-residue polypeptide: Protein RecA (343 aa).

Position 65 to 72 (65 to 72 (GPESSGKT)) interacts with ATP.

This sequence belongs to the RecA family.

It localises to the cytoplasm. Can catalyze the hydrolysis of ATP in the presence of single-stranded DNA, the ATP-dependent uptake of single-stranded DNA by duplex DNA, and the ATP-dependent hybridization of homologous single-stranded DNAs. It interacts with LexA causing its activation and leading to its autocatalytic cleavage. This chain is Protein RecA, found in Pseudoalteromonas atlantica (strain T6c / ATCC BAA-1087).